The sequence spans 356 residues: Tyrosine recombinase XerS (356 aa).

The Core-binding (CB) domain occupies 16 to 121; sequence LMPWYVLEYY…ALSSLYKYLT (106 aa). The Tyr recombinase domain maps to 169 to 354; it reads GFLTYIDQEH…VNDEQKNALD (186 aa). Residues Arg-210, Lys-234, His-306, Arg-309, and His-332 contribute to the active site. Residue Tyr-341 is the O-(3'-phospho-DNA)-tyrosine intermediate of the active site.

Belongs to the 'phage' integrase family. XerS subfamily.

It is found in the cytoplasm. With respect to regulation, ftsK is required for recombination. Site-specific tyrosine recombinase, which acts by catalyzing the cutting and rejoining of the recombining DNA molecules. Essential to convert dimers of the bacterial chromosome into monomers to permit their segregation at cell division. The sequence is that of Tyrosine recombinase XerS from Streptococcus pneumoniae serotype 19F (strain G54).